Reading from the N-terminus, the 361-residue chain is MPGCPCPGCGMAGQRLLFLTVLALELLERAGGSQPALRSLGAAAACRLDSKESESWGALLSGERLDTWICSLLGSLMVGLSGVFPLLVIPLEMGTMLQSEAGAWRLKQLLSFALGGLLGNVFLHLLPEAWAYTCNISPGVEGQSLQRQQQLGLWVIAGFLTFLALEKMFLNCKEEDPSQAPSKDPTAAALNGGHCLAQPAAEPGLRAVVRNLKVSGYLNLLANTIDNFTHGLAVAASFLVSKKIGLLTTMAILLHEIPHEVGDFAILLRAGFDRWTAAKLQFSTALGGLLGACFAICTQSPKGVEETVVWTLPFTSGGFLYVALVNVLPDLLEEDDPWHLNPPLPTGTPCSRCCCSAPVSW.

Topologically, residues 1-6 are lumenal; it reads MPGCPC. Residues 7 to 27 form a helical membrane-spanning segment; that stretch reads PGCGMAGQRLLFLTVLALELL. Topologically, residues 28 to 68 are cytoplasmic; the sequence is ERAGGSQPALRSLGAAAACRLDSKESESWGALLSGERLDTW. Residues 69–89 traverse the membrane as a helical segment; sequence ICSLLGSLMVGLSGVFPLLVI. Residues 90–108 are Lumenal-facing; the sequence is PLEMGTMLQSEAGAWRLKQ. Residues 109 to 129 form a helical membrane-spanning segment; it reads LLSFALGGLLGNVFLHLLPEA. Residues 130-150 lie on the Cytoplasmic side of the membrane; that stretch reads WAYTCNISPGVEGQSLQRQQQ. Residues 151–171 traverse the membrane as a helical segment; it reads LGLWVIAGFLTFLALEKMFLN. The Lumenal portion of the chain corresponds to 172 to 233; sequence CKEEDPSQAP…TIDNFTHGLA (62 aa). The helical transmembrane segment at 234–254 threads the bilayer; that stretch reads VAASFLVSKKIGLLTTMAILL. An XEXPHE-motif motif is present at residues 255–260; it reads HEIPHE. At 255 to 276 the chain is on the cytoplasmic side; that stretch reads HEIPHEVGDFAILLRAGFDRWT. Residues 277–297 form a helical membrane-spanning segment; the sequence is AAKLQFSTALGGLLGACFAIC. Residues 298–307 are Lumenal-facing; the sequence is TQSPKGVEET. A helical membrane pass occupies residues 308–328; it reads VVWTLPFTSGGFLYVALVNVL. Over 329–340 the chain is Cytoplasmic; it reads PDLLEEDDPWHL. A helical membrane pass occupies residues 341–361; sequence NPPLPTGTPCSRCCCSAPVSW.

It belongs to the ZIP transporter (TC 2.A.5) family. Homodimer.

Its subcellular location is the golgi apparatus membrane. The protein localises to the cytoplasmic vesicle membrane. The protein resides in the endoplasmic reticulum membrane. It catalyses the reaction Zn(2+)(in) = Zn(2+)(out). Functions as a zinc transporter transporting Zn(2+) from the Golgi apparatus to the cytosol and thus influences the zinc level at least in areas of the cytosol. May regulate beige adipocyte differentiation. In Rattus norvegicus (Rat), this protein is Zinc transporter ZIP13.